A 334-amino-acid polypeptide reads, in one-letter code: MLYSLARPMLFSLAPERAHELTLSMLKTAHKMGMLRQTIQPKPVTCMGIEFPNPVGLAAGLDKNGAYIDALAGLGFGFIEIGTITPRPQSGNPKPRLFRIPEAKAIINRMGFNNEGVDQLVENVKAAKFRGILGINIGKNADTPVENAVDDYLICLEKVYNYASYITVNISSPNTKNLRSLQSGDALTELLETLKKRQLELAEQYHHYVPLVLKVAPDLTHEDIQFISEQLLTFKIDGLIVTNTTLSREGVENLPFGNEAGGLSGAPVFEKSTECLRSFAKVLNDQIPLIGVGGITQGEHAVAKKDAGASLVQIYSGLIYTGPDLIKECVSAIT.

FMN contacts are provided by residues 59-63 (AGLDK) and T83. K63 contacts substrate. 108–112 (NRMGF) is a binding site for substrate. 2 residues coordinate FMN: N136 and N169. A substrate-binding site is contributed by N169. The active-site Nucleophile is the S172. N174 contributes to the substrate binding site. Residues K214 and T242 each coordinate FMN. 243 to 244 (NT) is a binding site for substrate. Residues G265, G294, and 315–316 (YS) each bind FMN.

Belongs to the dihydroorotate dehydrogenase family. Type 2 subfamily. In terms of assembly, monomer. The cofactor is FMN.

It localises to the cell membrane. It catalyses the reaction (S)-dihydroorotate + a quinone = orotate + a quinol. It functions in the pathway pyrimidine metabolism; UMP biosynthesis via de novo pathway; orotate from (S)-dihydroorotate (quinone route): step 1/1. In terms of biological role, catalyzes the conversion of dihydroorotate to orotate with quinone as electron acceptor. This is Dihydroorotate dehydrogenase (quinone) from Acinetobacter baylyi (strain ATCC 33305 / BD413 / ADP1).